The following is a 460-amino-acid chain: tRNA modification GTPase MnmE (460 aa).

Residues Arg-22, Glu-83, and Lys-122 each coordinate (6S)-5-formyl-5,6,7,8-tetrahydrofolate. Residues 219–381 (GIKTLIIGRP…LQQTILKKFQ (163 aa)) form the TrmE-type G domain. Asn-229 provides a ligand contact to K(+). Residues 229–234 (NVGKSS), 248–254 (SDISGTT), and 273–276 (DTAG) contribute to the GTP site. Ser-233 is a binding site for Mg(2+). The K(+) site is built by Ser-248, Ile-250, and Thr-253. Residue Thr-254 participates in Mg(2+) binding. Lys-460 is a (6S)-5-formyl-5,6,7,8-tetrahydrofolate binding site.

This sequence belongs to the TRAFAC class TrmE-Era-EngA-EngB-Septin-like GTPase superfamily. TrmE GTPase family. Homodimer. Heterotetramer of two MnmE and two MnmG subunits. K(+) is required as a cofactor.

It localises to the cytoplasm. Exhibits a very high intrinsic GTPase hydrolysis rate. Involved in the addition of a carboxymethylaminomethyl (cmnm) group at the wobble position (U34) of certain tRNAs, forming tRNA-cmnm(5)s(2)U34. The sequence is that of tRNA modification GTPase MnmE from Aster yellows witches'-broom phytoplasma (strain AYWB).